An 808-amino-acid polypeptide reads, in one-letter code: Homeobox-leucine zipper protein HDG1 (808 aa).

The disordered stretch occupies residues 57–121 (LQTNGEMSRN…KRYHRHTPKQ (65 aa)). The segment covering 79-90 (SRGEDVESRSES) has biased composition (basic and acidic residues). Residues 108-119 (LKKKKRYHRHTP) are compositionally biased toward basic residues. The segment at residues 110–169 (KKKRYHRHTPKQIQDLESVFKECAHPDEKQRLDLSRRLNLDPRQVKFWFQNRRTQMKTQI) is a DNA-binding region (homeobox). The stretch at 158-233 (FQNRRTQMKT…SRLKDELDRV (76 aa)) forms a coiled coil. An START domain is found at 310-541 (DFDQRSRYLD…LQRQCECLTI (232 aa)).

The protein belongs to the HD-ZIP homeobox family. Class IV subfamily. As to quaternary structure, interacts with CFL1. Binds with BBM. As to expression, expressed in trichomes forming at the base of young leaves, in endodermal cell lines around emergent lateral roots and in the epidermal layer of the stamen filament.

It is found in the nucleus. Functionally, probable transcription factor. Promotes cuticle development probably by modulating the expression of the downstream genes BDG and FDH, possibly repressed in a CFL1-dependent manner. Involved, together with PDF2, in the regulation of flower organs development by promoting the expression of APETALA 3 (AP3) in the epidermis and internal cell layers of developing flowers. In opposition to BBM, seems to promote cell differentiation and giant cell identity via transcriptional repression of meristem and cell proliferation genes. In Arabidopsis thaliana (Mouse-ear cress), this protein is Homeobox-leucine zipper protein HDG1.